A 414-amino-acid chain; its full sequence is 5-aminolevulinate synthase (414 aa).

Positions 22, 133, and 152 each coordinate substrate. Positions 185, 213, and 241 each coordinate pyridoxal 5'-phosphate. Lys-244 is an active-site residue. Lys-244 is modified (N6-(pyridoxal phosphate)lysine). Pyridoxal 5'-phosphate contacts are provided by Thr-273 and Thr-274. Residue Thr-359 participates in substrate binding.

Belongs to the class-II pyridoxal-phosphate-dependent aminotransferase family. As to quaternary structure, homodimer. Pyridoxal 5'-phosphate is required as a cofactor.

The catalysed reaction is succinyl-CoA + glycine + H(+) = 5-aminolevulinate + CO2 + CoA. It participates in porphyrin-containing compound metabolism; protoporphyrin-IX biosynthesis; 5-aminolevulinate from glycine: step 1/1. The chain is 5-aminolevulinate synthase (hemA) from Rickettsia felis (strain ATCC VR-1525 / URRWXCal2) (Rickettsia azadi).